Here is a 165-residue protein sequence, read N- to C-terminus: Protein SprT (165 aa).

Positions 22 to 163 constitute a SprT-like domain; that stretch reads LAQANLKLDR…RCVHCGEPLV (142 aa). His78 lines the Zn(2+) pocket. Glu79 is a catalytic residue. Zn(2+) is bound at residue His82.

It belongs to the SprT family. The cofactor is Zn(2+).

The protein resides in the cytoplasm. The polypeptide is Protein SprT (Salmonella paratyphi A (strain ATCC 9150 / SARB42)).